The chain runs to 326 residues: Vomeronasal type-1 receptor 100 (326 aa).

At 1–32 (MSEFPFFSPQPLFSYMMNKNSRVHTDSNIRNT) the chain is on the extracellular side. A helical transmembrane segment spans residues 33-53 (FFTEIGIGILANSFLLLFHIF). Residues 54–70 (KFIRGQRSRLTDLPIGL) are Cytoplasmic-facing. Residues 71–91 (LSLIHLLMLLMGAFIAIDIFI) traverse the membrane as a helical segment. At 92–104 (SWRGWDDIICKFL) the chain is on the extracellular side. A disulfide bond links Cys-101 and Cys-188. A helical transmembrane segment spans residues 105–127 (VYLYRSFRGLSLCTTCMLSVLQA). The Cytoplasmic portion of the chain corresponds to 128–149 (ITLSPRSSCLAKFKHKSPHHVS). Residues 150-170 (CAIISLSILYMFISSHLLVSI) form a helical membrane-spanning segment. Residues 171 to 209 (NATPNLTTNNFMQVTQSCYIIPLSYLMQSMFSTLLAIRD) are Extracellular-facing. N-linked (GlcNAc...) asparagine glycosylation occurs at Asn-175. A helical transmembrane segment spans residues 210–230 (ISLISLMVLSTCYMVVLLCRH). The Cytoplasmic portion of the chain corresponds to 231-254 (RNQIQHLQGTNLSPKASPEQRATQ). Residues 255–275 (TILMLMTFFVLMSIFDSIVSC) traverse the membrane as a helical segment. At 276–285 (SRTMYLNDPT) the chain is on the extracellular side. Residues 286 to 306 (SYYIQIFVVYIYATVSPFVFM) form a helical membrane-spanning segment. Over 307-326 (STEKHIVNFLKSMCVRVKNV) the chain is Cytoplasmic.

The protein belongs to the G-protein coupled receptor 1 family. In terms of tissue distribution, expressed in 1-4% of neurons of the vomeronasal organ. Only one pheromone receptor gene may be expressed in a particular neuron. Not expressed in the main olfactory epithelium.

Its subcellular location is the cell membrane. Putative pheromone receptor implicated in the regulation of social as well as reproductive behavior. The protein is Vomeronasal type-1 receptor 100 (Vom1r100) of Rattus norvegicus (Rat).